The chain runs to 122 residues: Urocortin (122 aa).

The signal sequence occupies residues 1-25; it reads MRQRGRATLLVALLLLVQLRPESSQ. Residues 26 to 80 constitute a propeptide that is removed on maturation; it reads WSPAAAAANVVQDPNLRWNPGVRNQGGGVRALLLLLAERFPRRAGSEPAGERQRR. Valine 120 is modified (valine amide).

The protein belongs to the sauvagine/corticotropin-releasing factor/urotensin I family. In terms of assembly, interacts with CRHR1 and CRHR2 (via their N-terminal extracellular domain).

It is found in the secreted. In terms of biological role, acts in vitro to stimulate the secretion of adrenocorticotropic hormone (ACTH). Binds with high affinity to CRF receptor types 1, 2-alpha, and 2-beta. Plays a role in the establishment of normal hearing thresholds. Reduces food intake and regulates ghrelin levels in gastric body and plasma. The protein is Urocortin (Ucn) of Rattus norvegicus (Rat).